Consider the following 316-residue polypeptide: Acetyl-coenzyme A carboxylase carboxyl transferase subunit alpha (316 aa).

In terms of domain architecture, CoA carboxyltransferase C-terminal spans 36–290; it reads PLRTQLETLR…GSVISRHLDD (255 aa).

The protein belongs to the AccA family. In terms of assembly, acetyl-CoA carboxylase is a heterohexamer composed of biotin carboxyl carrier protein (AccB), biotin carboxylase (AccC) and two subunits each of ACCase subunit alpha (AccA) and ACCase subunit beta (AccD).

It is found in the cytoplasm. It carries out the reaction N(6)-carboxybiotinyl-L-lysyl-[protein] + acetyl-CoA = N(6)-biotinyl-L-lysyl-[protein] + malonyl-CoA. It participates in lipid metabolism; malonyl-CoA biosynthesis; malonyl-CoA from acetyl-CoA: step 1/1. In terms of biological role, component of the acetyl coenzyme A carboxylase (ACC) complex. First, biotin carboxylase catalyzes the carboxylation of biotin on its carrier protein (BCCP) and then the CO(2) group is transferred by the carboxyltransferase to acetyl-CoA to form malonyl-CoA. This Deinococcus radiodurans (strain ATCC 13939 / DSM 20539 / JCM 16871 / CCUG 27074 / LMG 4051 / NBRC 15346 / NCIMB 9279 / VKM B-1422 / R1) protein is Acetyl-coenzyme A carboxylase carboxyl transferase subunit alpha.